The primary structure comprises 100 residues: MAKKSMIARDVKRKKIVERYAAKRAALMAAFDAAKDPMQRLEIHRKIQALPRNSAPTRIRNRCWATGKPRGVYRDFGLCRNQLRERAHKGELPGVVKSSW.

The protein belongs to the universal ribosomal protein uS14 family. Part of the 30S ribosomal subunit. Contacts proteins S3 and S10.

Functionally, binds 16S rRNA, required for the assembly of 30S particles and may also be responsible for determining the conformation of the 16S rRNA at the A site. The protein is Small ribosomal subunit protein uS14 of Prochlorococcus marinus (strain MIT 9303).